The sequence spans 75 residues: U6-lycotoxin-Ls1h (75 aa).

Residues 1–21 (MKLLLFTALVLVVISLIEVEA) form the signal peptide. Positions 22–25 (ENER) are excised as a propeptide.

It belongs to the neurotoxin 19 (CSTX) family. 06 (U6-Lctx) subfamily. Post-translationally, contains 4 disulfide bonds. In terms of tissue distribution, expressed by the venom gland.

Its subcellular location is the secreted. The sequence is that of U6-lycotoxin-Ls1h from Lycosa singoriensis (Wolf spider).